The following is a 290-amino-acid chain: ATP synthase gamma chain (290 aa).

The protein belongs to the ATPase gamma chain family. As to quaternary structure, F-type ATPases have 2 components, CF(1) - the catalytic core - and CF(0) - the membrane proton channel. CF(1) has five subunits: alpha(3), beta(3), gamma(1), delta(1), epsilon(1). CF(0) has three main subunits: a, b and c.

The protein resides in the cell inner membrane. In terms of biological role, produces ATP from ADP in the presence of a proton gradient across the membrane. The gamma chain is believed to be important in regulating ATPase activity and the flow of protons through the CF(0) complex. This Anaeromyxobacter sp. (strain K) protein is ATP synthase gamma chain.